A 512-amino-acid polypeptide reads, in one-letter code: Sodium/proline symporter (512 aa).

The next 13 helical transmembrane spans lie at 16-36 (WQTY…GFYG), 54-74 (IGPY…WMIM), 85-105 (LSAM…YFVV), 139-159 (IISG…GFVS), 174-194 (FGLI…GYLA), 200-220 (FFQG…AMMN), 240-260 (LFKG…LGYF), 286-306 (ISWM…GIAF), 327-347 (VLFH…AIMS), 381-401 (FVMI…AIAW), 410-430 (LVGN…LFAL), 438-458 (AGAV…IAWI), and 467-487 (IFGL…TYVV).

This sequence belongs to the sodium:solute symporter (SSF) (TC 2.A.21) family.

Its subcellular location is the cell membrane. The enzyme catalyses L-proline(in) + Na(+)(in) = L-proline(out) + Na(+)(out). Functionally, catalyzes the sodium-dependent uptake of extracellular L-proline. Since most S.aureus strains are L-proline auxotrophs, this transporter may aid the bacterial persistence during an infection of tissues with low proline concentrations. The sequence is that of Sodium/proline symporter (putP) from Staphylococcus aureus (strain Newman).